A 452-amino-acid chain; its full sequence is UDP-N-acetylmuramate--L-alanine ligase (452 aa).

110–116 (GTHGKTT) lines the ATP pocket.

It belongs to the MurCDEF family.

The protein localises to the cytoplasm. The catalysed reaction is UDP-N-acetyl-alpha-D-muramate + L-alanine + ATP = UDP-N-acetyl-alpha-D-muramoyl-L-alanine + ADP + phosphate + H(+). The protein operates within cell wall biogenesis; peptidoglycan biosynthesis. Its function is as follows. Cell wall formation. This is UDP-N-acetylmuramate--L-alanine ligase from Francisella philomiragia subsp. philomiragia (strain ATCC 25017 / CCUG 19701 / FSC 153 / O#319-036).